The chain runs to 30 residues: Ranatuerin-2OK (30 aa).

Cys-23 and Cys-30 are oxidised to a cystine.

In terms of tissue distribution, expressed by the skin glands.

Its subcellular location is the secreted. Functionally, antimicrobial peptide. Active against Gram-negative bacterium E.coli (MIC=12.5 uM) and against Gram-positive bacterium S.aureus (MIC=50 uM). This chain is Ranatuerin-2OK, found in Nidirana okinavana (Kampira Falls frog).